Consider the following 314-residue polypeptide: Beta-ketoacyl-[acyl-carrier-protein] synthase III (314 aa).

Residues Cys112 and His241 contribute to the active site. The tract at residues 242-246 (QANIR) is ACP-binding. Asn271 is an active-site residue.

This sequence belongs to the thiolase-like superfamily. FabH family. As to quaternary structure, homodimer.

The protein resides in the cytoplasm. The enzyme catalyses malonyl-[ACP] + acetyl-CoA + H(+) = 3-oxobutanoyl-[ACP] + CO2 + CoA. It functions in the pathway lipid metabolism; fatty acid biosynthesis. Functionally, catalyzes the condensation reaction of fatty acid synthesis by the addition to an acyl acceptor of two carbons from malonyl-ACP. Catalyzes the first condensation reaction which initiates fatty acid synthesis and may therefore play a role in governing the total rate of fatty acid production. Possesses both acetoacetyl-ACP synthase and acetyl transacylase activities. Its substrate specificity determines the biosynthesis of branched-chain and/or straight-chain of fatty acids. This chain is Beta-ketoacyl-[acyl-carrier-protein] synthase III, found in Vesicomyosocius okutanii subsp. Calyptogena okutanii (strain HA).